Here is a 168-residue protein sequence, read N- to C-terminus: MLARMLNTTLSACFLSLLAFSSACYFQNCPRGGKRAISDMELRQCLPCGPGGKGRCFGPSICCADELGCFVGTAEALRCQEENYLPSPCQSGQKPCGSGGRCAAVGICCSDESCVAEPECHDGFFRLTRAREPSNATQLDGPARALLLRLVQLAGTRESVDSAKPRVY.

A signal peptide spans 1 to 23 (MLARMLNTTLSACFLSLLAFSSA). The cysteines at positions 24 and 29 are disulfide-linked. Gly-32 carries the post-translational modification Glycine amide. 7 disulfides stabilise this stretch: Cys-45–Cys-89, Cys-48–Cys-62, Cys-56–Cys-79, Cys-63–Cys-69, Cys-96–Cys-108, Cys-102–Cys-120, and Cys-109–Cys-114. N-linked (GlcNAc...) asparagine glycosylation occurs at Asn-135.

Belongs to the vasopressin/oxytocin family. As to quaternary structure, interacts with vasopressin receptors V1bR/AVPR1B (Ki=85 pM), V1aR/AVPR1A (Ki=0.6 nM) and V2R/AVPR2 (Ki=4.9 nM). Interacts with oxytocin receptor (OXTR) (Ki=110 nM).

Its subcellular location is the secreted. Functionally, neurophysin 2 specifically binds vasopressin. In terms of biological role, vasopressin has a direct antidiuretic action on the kidney, it also causes vasoconstriction of the peripheral vessels. Acts by binding to vasopressin receptors (V1bR/AVPR1B, V1aR/AVPR1A, and V2R/AVPR2). This Mus musculus (Mouse) protein is Vasopressin-neurophysin 2-copeptin (Avp).